We begin with the raw amino-acid sequence, 307 residues long: Ribonuclease Z (307 aa).

Residues His-63, His-65, Asp-67, His-68, His-141, Asp-212, and His-270 each coordinate Zn(2+). The active-site Proton acceptor is the Asp-67.

It belongs to the RNase Z family. In terms of assembly, homodimer. Requires Zn(2+) as cofactor.

It catalyses the reaction Endonucleolytic cleavage of RNA, removing extra 3' nucleotides from tRNA precursor, generating 3' termini of tRNAs. A 3'-hydroxy group is left at the tRNA terminus and a 5'-phosphoryl group is left at the trailer molecule.. Functionally, zinc phosphodiesterase, which displays some tRNA 3'-processing endonuclease activity. Probably involved in tRNA maturation, by removing a 3'-trailer from precursor tRNA. The chain is Ribonuclease Z from Bacillus cereus (strain ATCC 14579 / DSM 31 / CCUG 7414 / JCM 2152 / NBRC 15305 / NCIMB 9373 / NCTC 2599 / NRRL B-3711).